A 94-amino-acid polypeptide reads, in one-letter code: Aspartyl/glutamyl-tRNA(Asn/Gln) amidotransferase subunit C (94 aa).

The protein belongs to the GatC family. Heterotrimer of A, B and C subunits.

It catalyses the reaction L-glutamyl-tRNA(Gln) + L-glutamine + ATP + H2O = L-glutaminyl-tRNA(Gln) + L-glutamate + ADP + phosphate + H(+). The catalysed reaction is L-aspartyl-tRNA(Asn) + L-glutamine + ATP + H2O = L-asparaginyl-tRNA(Asn) + L-glutamate + ADP + phosphate + 2 H(+). Allows the formation of correctly charged Asn-tRNA(Asn) or Gln-tRNA(Gln) through the transamidation of misacylated Asp-tRNA(Asn) or Glu-tRNA(Gln) in organisms which lack either or both of asparaginyl-tRNA or glutaminyl-tRNA synthetases. The reaction takes place in the presence of glutamine and ATP through an activated phospho-Asp-tRNA(Asn) or phospho-Glu-tRNA(Gln). In Caldicellulosiruptor bescii (strain ATCC BAA-1888 / DSM 6725 / KCTC 15123 / Z-1320) (Anaerocellum thermophilum), this protein is Aspartyl/glutamyl-tRNA(Asn/Gln) amidotransferase subunit C.